The sequence spans 39 residues: Alpha-conotoxin ArIA (39 aa).

The propeptide occupies 1-17 (SDGRNVAAKAFHRIGRT). Disulfide bonds link Cys-22/Cys-28 and Cys-23/Cys-36. Residues 24-26 (SNP) are ser-Xaa-Pro motif, crucial for potent interaction with nAChR. At Pro-33 the chain carries 4-hydroxyproline; in ArIA.

It belongs to the conotoxin A superfamily. As to expression, expressed by the venom duct.

It is found in the secreted. Functionally, alpha-conotoxins act on postsynaptic membranes, they bind to the nicotinic acetylcholine receptors (nAChR) and thus inhibit them. This toxin acts as a competitive inhibitor and is 3-fold more potent on alpha-7/CHRNA7 nAChRs (IC(50)=6 nM) than on alpha-3-beta-2/CHRNA3-CHRNB2 nAChR (IC(50)=18 nM). In terms of biological role, acts as a competitive inhibitor and is 33-fold more potent on alpha-7/CHRNA7 nAChRs (IC(50)=1.8 nM) than on alpha-3-beta-2/CHRNA3-CHRNB2 nAChR (IC(50)=60.1 nM). This chain is Alpha-conotoxin ArIA, found in Conus arenatus (Sand-dusted cone).